The chain runs to 91 residues: UPF0213 protein NMA2126 (91 aa).

In terms of domain architecture, GIY-YIG spans 4 to 83 (SNWSLYLILC…AAQKRKLWEQ (80 aa)).

The protein belongs to the UPF0213 family.

This is UPF0213 protein NMA2126 from Neisseria meningitidis serogroup A / serotype 4A (strain DSM 15465 / Z2491).